We begin with the raw amino-acid sequence, 336 residues long: Biotin synthase (336 aa).

Residues 36-263 (TKVQISTLLS…ESHVRLAAGR (228 aa)) form the Radical SAM core domain. [4Fe-4S] cluster is bound by residues C51, C55, and C58. The [2Fe-2S] cluster site is built by C95, C126, C186, and R258.

This sequence belongs to the radical SAM superfamily. Biotin synthase family. Homodimer. [4Fe-4S] cluster is required as a cofactor. It depends on [2Fe-2S] cluster as a cofactor.

It catalyses the reaction (4R,5S)-dethiobiotin + (sulfur carrier)-SH + 2 reduced [2Fe-2S]-[ferredoxin] + 2 S-adenosyl-L-methionine = (sulfur carrier)-H + biotin + 2 5'-deoxyadenosine + 2 L-methionine + 2 oxidized [2Fe-2S]-[ferredoxin]. The protein operates within cofactor biosynthesis; biotin biosynthesis; biotin from 7,8-diaminononanoate: step 2/2. In terms of biological role, catalyzes the conversion of dethiobiotin (DTB) to biotin by the insertion of a sulfur atom into dethiobiotin via a radical-based mechanism. The chain is Biotin synthase from Gluconobacter oxydans (strain 621H) (Gluconobacter suboxydans).